We begin with the raw amino-acid sequence, 216 residues long: Somatotropin (216 aa).

The first 25 residues, 1 to 25 (MAPGSWFSPLLIAVVTLGLPQEAAA), serve as a signal peptide directing secretion. Histidine 45 is a Zn(2+) binding site. A disulfide bridge connects residues cysteine 78 and cysteine 189. Zn(2+) is bound at residue glutamate 198. Cysteines 206 and 214 form a disulfide.

It belongs to the somatotropin/prolactin family.

Its subcellular location is the secreted. Growth hormone plays an important role in growth control. This chain is Somatotropin (GH), found in Gallus gallus (Chicken).